Reading from the N-terminus, the 1298-residue chain is Phosphoribosylformylglycinamidine synthase (1298 aa).

The interval 303 to 327 (FPGAATGSGGEIRDEGATGRGAKPK) is disordered. ATP is bound by residues 305-316 (GAATGSGGEIRD), 384-386 (TGY), and Ala676. Mg(2+)-binding residues include Asp677, Glu716, Asn720, and Asp884. Ser886 contributes to the ATP binding site. Positions 1045–1298 (VAVLREQGVN…MFRNARAWVN (254 aa)) constitute a Glutamine amidotransferase type-1 domain. Catalysis depends on Cys1138, which acts as the Nucleophile. Catalysis depends on residues His1263 and Glu1265.

In the N-terminal section; belongs to the FGAMS family. As to quaternary structure, monomer.

It localises to the cytoplasm. The enzyme catalyses N(2)-formyl-N(1)-(5-phospho-beta-D-ribosyl)glycinamide + L-glutamine + ATP + H2O = 2-formamido-N(1)-(5-O-phospho-beta-D-ribosyl)acetamidine + L-glutamate + ADP + phosphate + H(+). Its pathway is purine metabolism; IMP biosynthesis via de novo pathway; 5-amino-1-(5-phospho-D-ribosyl)imidazole from N(2)-formyl-N(1)-(5-phospho-D-ribosyl)glycinamide: step 1/2. Phosphoribosylformylglycinamidine synthase involved in the purines biosynthetic pathway. Catalyzes the ATP-dependent conversion of formylglycinamide ribonucleotide (FGAR) and glutamine to yield formylglycinamidine ribonucleotide (FGAM) and glutamate. This chain is Phosphoribosylformylglycinamidine synthase, found in Pseudomonas syringae pv. tomato (strain ATCC BAA-871 / DC3000).